A 71-amino-acid polypeptide reads, in one-letter code: uncharacterized protein (71 aa).

An N-terminal signal peptide occupies residues 1–21; sequence MGVGLHGDHVGGELNSANAFT.

This is an uncharacterized protein from Haemophilus influenzae (strain ATCC 51907 / DSM 11121 / KW20 / Rd).